The sequence spans 397 residues: Homeobox protein knotted-1-like 2 (397 aa).

3 disordered regions span residues 43 to 68, 172 to 191, and 233 to 276; these read TFHL…SPGT, FEAR…DPEL, and NNNA…PRAE. The span at 49-58 shows a compositional bias: gly residues; it reads SGGGGGGGSG. An ELK domain is found at 279-299; that stretch reads ELKNHLLRKYSGYLSSLKQEL. Residues 300–363 constitute a DNA-binding region (homeobox; TALE-type); it reads SKKKKKGKLP…NQRKRHWKPS (64 aa).

Belongs to the TALE/KNOX homeobox family. In terms of tissue distribution, expressed only in the stems.

It localises to the nucleus. Functionally, probably binds to the DNA sequence 5'-TGAC-3'. This chain is Homeobox protein knotted-1-like 2, found in Malus domestica (Apple).